Here is a 266-residue protein sequence, read N- to C-terminus: Tryptophan synthase alpha chain (266 aa).

Catalysis depends on proton acceptor residues Glu-51 and Asp-62.

This sequence belongs to the TrpA family. As to quaternary structure, tetramer of two alpha and two beta chains.

It carries out the reaction (1S,2R)-1-C-(indol-3-yl)glycerol 3-phosphate + L-serine = D-glyceraldehyde 3-phosphate + L-tryptophan + H2O. It functions in the pathway amino-acid biosynthesis; L-tryptophan biosynthesis; L-tryptophan from chorismate: step 5/5. Functionally, the alpha subunit is responsible for the aldol cleavage of indoleglycerol phosphate to indole and glyceraldehyde 3-phosphate. The protein is Tryptophan synthase alpha chain of Thermosynechococcus vestitus (strain NIES-2133 / IAM M-273 / BP-1).